The chain runs to 81 residues: Defensin-like protein b (81 aa).

The signal sequence occupies residues 1-26 (MRNATFFIVFYVFISLVLSNVQDVTA). 4 disulfides stabilise this stretch: cysteine 31–cysteine 81, cysteine 42–cysteine 66, cysteine 50–cysteine 76, and cysteine 64–cysteine 78.

It belongs to the DEFL family. In terms of tissue distribution, expressed in microspores and in young and mature anthers.

Its subcellular location is the secreted. In terms of biological role, involved in self-incompatibility. This is Defensin-like protein b (SCRb-1) from Arabidopsis lyrata (Lyre-leaved rock-cress).